We begin with the raw amino-acid sequence, 458 residues long: tRNA-2-methylthio-N(6)-dimethylallyladenosine synthase (458 aa).

Residues 2 to 118 (PKLYIKTYGC…VFEHVDGILR (117 aa)) enclose the MTTase N-terminal domain. The [4Fe-4S] cluster site is built by cysteine 11, cysteine 47, cysteine 81, cysteine 170, cysteine 174, and cysteine 177. A Radical SAM core domain is found at 156 to 389 (PGVRSTAYVS…LAVVNEIAIR (234 aa)). One can recognise a TRAM domain in the interval 392–455 (RDLVGTVQEV…GFTLYGVPCP (64 aa)).

Belongs to the methylthiotransferase family. MiaB subfamily. In terms of assembly, monomer. It depends on [4Fe-4S] cluster as a cofactor.

The protein localises to the cytoplasm. It catalyses the reaction N(6)-dimethylallyladenosine(37) in tRNA + (sulfur carrier)-SH + AH2 + 2 S-adenosyl-L-methionine = 2-methylsulfanyl-N(6)-dimethylallyladenosine(37) in tRNA + (sulfur carrier)-H + 5'-deoxyadenosine + L-methionine + A + S-adenosyl-L-homocysteine + 2 H(+). Its function is as follows. Catalyzes the methylthiolation of N6-(dimethylallyl)adenosine (i(6)A), leading to the formation of 2-methylthio-N6-(dimethylallyl)adenosine (ms(2)i(6)A) at position 37 in tRNAs that read codons beginning with uridine. The sequence is that of tRNA-2-methylthio-N(6)-dimethylallyladenosine synthase from Akkermansia muciniphila (strain ATCC BAA-835 / DSM 22959 / JCM 33894 / BCRC 81048 / CCUG 64013 / CIP 107961 / Muc).